A 291-amino-acid polypeptide reads, in one-letter code: Tetrahydromethanopterin:alpha-L-glutamate ligase (291 aa).

Residues 101–286 (SVFLELNNLP…IADKLLEKII (186 aa)) enclose the ATP-grasp domain. ATP contacts are provided by residues K136, 175–187 (QEFIKPVRNEHRD), and R203. Mg(2+) contacts are provided by D247, E259, and N261. Residues D247, E259, and N261 each coordinate Mn(2+).

The protein belongs to the RimK family. MptN subfamily. In terms of assembly, homodimer. Mg(2+) is required as a cofactor. Mn(2+) serves as cofactor.

It carries out the reaction 5,6,7,8-tetrahydromethanopterin + L-glutamate + ATP = 5,6,7,8-tetrahydrosarcinapterin + ADP + phosphate + H(+). Its pathway is cofactor biosynthesis; 5,6,7,8-tetrahydrosarcinapterin biosynthesis. Catalyzes the ATP or GTP-dependent addition of one L-glutamate molecule to tetrahydromethanopterin, producing tetrahydrosarcinapterin. This is Tetrahydromethanopterin:alpha-L-glutamate ligase (mptN) from Methanocaldococcus jannaschii (strain ATCC 43067 / DSM 2661 / JAL-1 / JCM 10045 / NBRC 100440) (Methanococcus jannaschii).